A 110-amino-acid polypeptide reads, in one-letter code: HTH-type transcriptional regulator TnrA (110 aa).

The 69-residue stretch at 13 to 81 (VISIGIVSEL…TAEILKDMRK (69 aa)) folds into the HTH merR-type domain. Positions 16-35 (IGIVSELTGLSVRQIRYYEE) form a DNA-binding region, H-T-H motif.

As to quaternary structure, homodimer. Under conditions of nitrogen excess, TnrA forms a stable complex with feedback-inhibited GlnA. Interacts with GlnK-AmtB complex.

It is found in the cell membrane. With respect to regulation, under conditions of nitrogen excess, the DNA-binding activity is inhibited by the formation of a stable complex with feedback-inhibited GlnA. The presence of glutamine and AMP increases the inhibitory activity of glutamine synthetase by more than 1000-fold. Functionally, transcription regulator that actives the transcription of genes required for nitrogen assimilation such as nrgAB (ammonium transport), nasABCDEF (nitrate/nitrite assimilation), ureABC (urea degradation) and gabP (GABA transport), during nitrogen limitation. Also represses glnRA and gltAB in the absence of ammonium. On the contrary of the MerR members, which require longer DNA sites for high-affinity binding, TnrA requires a DNA sequence of 17 nucleotides as minimal binding site. This chain is HTH-type transcriptional regulator TnrA, found in Bacillus subtilis (strain 168).